Reading from the N-terminus, the 395-residue chain is RNA polymerase II elongation factor ELL3 (395 aa).

2 disordered regions span residues 129 to 177 (LTEG…SEPM) and 189 to 281 (PSRE…SPEE). Position 242 is a phosphoserine (Ser242). Acidic residues predominate over residues 243-260 (QEGEDWGQDEDEEGDEDG). Residues 269–279 (SAPSASESPSP) are compositionally biased toward low complexity. The 111-residue stretch at 283 to 393 (PDYLLQYRAI…LILEFEEKNR (111 aa)) folds into the OCEL domain.

Belongs to the ELL/occludin family. In terms of assembly, component of the little elongation complex (LEC), at least composed of ELL (ELL, ELL2 or ELL3), ZC3H8, ICE1 and ICE2. Component of the super elongation complex (SEC), at least composed of EAF1, EAF2, CDK9, MLLT3/AF9, AFF (AFF1 or AFF4), the P-TEFb complex and ELL (ELL, ELL2 or ELL3). Interacts with AFF4. In terms of tissue distribution, actively expressed in embryonic stem cells (ES cells), while it is weakly expressed in differentiated cells.

The protein localises to the nucleus. Functionally, enhancer-binding elongation factor that specifically binds enhancers in embryonic stem cells (ES cells), marks them, and is required for their future activation during stem cell specification. Elongation factor component of the super elongation complex (SEC), a complex required to increase the catalytic rate of RNA polymerase II transcription by suppressing transient pausing by the polymerase at multiple sites along the DNA. Component of the little elongation complex (LEC), a complex required to regulate small nuclear RNA (snRNA) gene transcription by RNA polymerase II and III. Does not only bind to enhancer regions of active genes, but also marks the enhancers that are in a poised or inactive state in ES cells and is required for establishing proper RNA polymerase II occupancy at developmentally regulated genes in a cohesin-dependent manner. Probably required for priming developmentally regulated genes for later recruitment of the super elongation complex (SEC), for transcriptional activation during differentiation. Required for recruitment of P-TEFb within SEC during differentiation. Probably preloaded on germ cell chromatin, suggesting that it may prime gene activation by marking enhancers as early as in the germ cells. Promoting epithelial-mesenchymal transition (EMT). The protein is RNA polymerase II elongation factor ELL3 (Ell3) of Mus musculus (Mouse).